A 154-amino-acid polypeptide reads, in one-letter code: Large ribosomal subunit protein uL13 (154 aa).

Belongs to the universal ribosomal protein uL13 family. As to quaternary structure, part of the 50S ribosomal subunit.

This protein is one of the early assembly proteins of the 50S ribosomal subunit, although it is not seen to bind rRNA by itself. It is important during the early stages of 50S assembly. The chain is Large ribosomal subunit protein uL13 from Brucella melitensis biotype 2 (strain ATCC 23457).